The primary structure comprises 209 residues: Ubiquitin-conjugating enzyme E2 S (209 aa).

Residues 14 to 160 (QTIRQVMREL…ARMMTEIHAQ (147 aa)) enclose the UBC core domain. Residue C98 is the Glycyl thioester intermediate of the active site. The interval 165 to 209 (GVGATGDAKDDGGPSTKKHAGLDKKLQDKKKEKLLKEKKRMLKRL) is disordered. Residues 184–199 (AGLDKKLQDKKKEKLL) are compositionally biased toward basic and acidic residues. A compositionally biased stretch (basic residues) spans 200–209 (KEKKRMLKRL).

The protein belongs to the ubiquitin-conjugating enzyme family.

The enzyme catalyses S-ubiquitinyl-[E1 ubiquitin-activating enzyme]-L-cysteine + [E2 ubiquitin-conjugating enzyme]-L-cysteine = [E1 ubiquitin-activating enzyme]-L-cysteine + S-ubiquitinyl-[E2 ubiquitin-conjugating enzyme]-L-cysteine.. It functions in the pathway protein modification; protein ubiquitination. Functionally, catalyzes the covalent attachment of ubiquitin to other proteins. Acts as an essential factor of the anaphase promoting complex/cyclosome (APC/C), a cell cycle-regulated ubiquitin ligase that controls progression through mitosis. Acts by specifically elongating polyubiquitin chains initiated by the E2 enzyme vih/UbcH10 on APC/C substrates, enhancing the degradation of APC/C substrates by the proteasome and promoting mitotic exit. The polypeptide is Ubiquitin-conjugating enzyme E2 S (Drosophila simulans (Fruit fly)).